The following is a 256-amino-acid chain: 1-(5-phosphoribosyl)-5-[(5-phosphoribosylamino)methylideneamino] imidazole-4-carboxamide isomerase (256 aa).

The Proton acceptor role is filled by D9. Residue D130 is the Proton donor of the active site.

It belongs to the HisA/HisF family.

Its subcellular location is the cytoplasm. It carries out the reaction 1-(5-phospho-beta-D-ribosyl)-5-[(5-phospho-beta-D-ribosylamino)methylideneamino]imidazole-4-carboxamide = 5-[(5-phospho-1-deoxy-D-ribulos-1-ylimino)methylamino]-1-(5-phospho-beta-D-ribosyl)imidazole-4-carboxamide. It participates in amino-acid biosynthesis; L-histidine biosynthesis; L-histidine from 5-phospho-alpha-D-ribose 1-diphosphate: step 4/9. This chain is 1-(5-phosphoribosyl)-5-[(5-phosphoribosylamino)methylideneamino] imidazole-4-carboxamide isomerase, found in Prochlorococcus marinus (strain SARG / CCMP1375 / SS120).